Reading from the N-terminus, the 99-residue chain is Aphid transmission protein (99 aa).

Belongs to the caulimoviridae ORF II family.

Its function is as follows. This protein is involved in virus transmission. This Cauliflower mosaic virus (strain W260) (CaMV) protein is Aphid transmission protein.